A 474-amino-acid chain; its full sequence is Replication factor C large subunit (474 aa).

45 to 52 is a binding site for ATP; it reads GPPGCGKT. Positions 415–468 are enriched in basic and acidic residues; it reads DKKTNNKKGKENKTKNTTKKIKEIKETPKKEEVKEPKKQIEKQKSEKKEPKKQM. Residues 415–474 form a disordered region; it reads DKKTNNKKGKENKTKNTTKKIKEIKETPKKEEVKEPKKQIEKQKSEKKEPKKQMTLESFF.

This sequence belongs to the activator 1 small subunits family. RfcL subfamily. As to quaternary structure, heteromultimer composed of small subunits (RfcS) and large subunits (RfcL).

Functionally, part of the RFC clamp loader complex which loads the PCNA sliding clamp onto DNA. The sequence is that of Replication factor C large subunit from Methanococcus aeolicus (strain ATCC BAA-1280 / DSM 17508 / OCM 812 / Nankai-3).